We begin with the raw amino-acid sequence, 79 residues long: Sulfur carrier protein TusA (79 aa).

The active-site Cysteine persulfide intermediate is the C17.

Belongs to the sulfur carrier protein TusA family.

The protein localises to the cytoplasm. In terms of biological role, sulfur carrier protein which probably makes part of a sulfur-relay system. The protein is Sulfur carrier protein TusA of Actinobacillus pleuropneumoniae serotype 5b (strain L20).